The following is a 169-amino-acid chain: Ribosome maturation factor RimP (169 aa).

It belongs to the RimP family.

The protein resides in the cytoplasm. Functionally, required for maturation of 30S ribosomal subunits. The sequence is that of Ribosome maturation factor RimP from Pseudomonas putida (strain ATCC 700007 / DSM 6899 / JCM 31910 / BCRC 17059 / LMG 24140 / F1).